A 349-amino-acid chain; its full sequence is S-adenosylmethionine decarboxylase proenzyme 3 (349 aa).

Catalysis depends on residues Glu9 and Glu12. Glu68 is a binding site for substrate. Residue Ser69 is the Schiff-base intermediate with substrate; via pyruvic acid of the active site. Residue Ser69 is modified to Pyruvic acid (Ser); by autocatalysis. Cys83 acts as the Proton donor; for catalytic activity in catalysis. Active-site proton acceptor; for processing activity residues include Ser235 and His248. Glu252 provides a ligand contact to substrate.

Belongs to the eukaryotic AdoMetDC family. It depends on pyruvate as a cofactor. Post-translationally, is synthesized initially as an inactive proenzyme. Formation of the active enzyme involves a self-maturation process in which the active site pyruvoyl group is generated from an internal serine residue via an autocatalytic post-translational modification. Two non-identical subunits are generated from the proenzyme in this reaction, and the pyruvate is formed at the N-terminus of the alpha chain, which is derived from the carboxyl end of the proenzyme. The post-translation cleavage follows an unusual pathway, termed non-hydrolytic serinolysis, in which the side chain hydroxyl group of the serine supplies its oxygen atom to form the C-terminus of the beta chain, while the remainder of the serine residue undergoes an oxidative deamination to produce ammonia and the pyruvoyl group blocking the N-terminus of the alpha chain.

The catalysed reaction is S-adenosyl-L-methionine + H(+) = S-adenosyl 3-(methylsulfanyl)propylamine + CO2. Its pathway is amine and polyamine biosynthesis; S-adenosylmethioninamine biosynthesis; S-adenosylmethioninamine from S-adenosyl-L-methionine: step 1/1. Functionally, essential for biosynthesis of the polyamines spermidine and spermine. Essential for polyamine homeostasis, and normal plant embryogenesis, growth and development. The chain is S-adenosylmethionine decarboxylase proenzyme 3 from Arabidopsis thaliana (Mouse-ear cress).